We begin with the raw amino-acid sequence, 563 residues long: Membrane protein insertase YidC (563 aa).

The chain crosses the membrane as a helical span at residues 1 to 21 (MDIKRTILIVALAIVTYVGVL). The disordered stretch occupies residues 43-62 (APGIPDTAAGTNGSASADVP). Helical transmembrane passes span 344–364 (LELT…FWLL), 370–390 (ILGN…GLFF), 440–460 (LGGC…YWVL), 471–491 (WILW…PIIM), and 518–538 (PIIF…YWVV).

Belongs to the OXA1/ALB3/YidC family. Type 1 subfamily. Interacts with the Sec translocase complex via SecD. Specifically interacts with transmembrane segments of nascent integral membrane proteins during membrane integration.

The protein localises to the cell inner membrane. Functionally, required for the insertion and/or proper folding and/or complex formation of integral membrane proteins into the membrane. Involved in integration of membrane proteins that insert both dependently and independently of the Sec translocase complex, as well as at least some lipoproteins. Aids folding of multispanning membrane proteins. The polypeptide is Membrane protein insertase YidC (Pseudomonas savastanoi pv. phaseolicola (strain 1448A / Race 6) (Pseudomonas syringae pv. phaseolicola (strain 1448A / Race 6))).